The sequence spans 121 residues: MMKVALIAHDDKKDDLLAFVKTHREFFARHELFATGTTGKIISENTGLTVHRFLSGPLGGDQQIGAMVAAGEIKLVIFFRDPLTAQPHEPDITALLRVCDVHNVPIATNWSSAELFLRALN.

Positions 1-121 (MMKVALIAHD…SAELFLRALN (121 aa)) constitute an MGS-like domain. Substrate-binding positions include His9, Lys13, 35–38 (TGTT), and 55–56 (SG). Catalysis depends on Asp61, which acts as the Proton donor/acceptor. Residue His88 participates in substrate binding.

The protein belongs to the methylglyoxal synthase family.

It catalyses the reaction dihydroxyacetone phosphate = methylglyoxal + phosphate. Its function is as follows. Catalyzes the formation of methylglyoxal from dihydroxyacetone phosphate. This is Methylglyoxal synthase from Carboxydothermus hydrogenoformans (strain ATCC BAA-161 / DSM 6008 / Z-2901).